Reading from the N-terminus, the 233-residue chain is Putative N-acetylmannosamine-6-phosphate 2-epimerase (233 aa).

This sequence belongs to the NanE family.

The enzyme catalyses an N-acyl-D-glucosamine 6-phosphate = an N-acyl-D-mannosamine 6-phosphate. It functions in the pathway amino-sugar metabolism; N-acetylneuraminate degradation; D-fructose 6-phosphate from N-acetylneuraminate: step 3/5. Converts N-acetylmannosamine-6-phosphate (ManNAc-6-P) to N-acetylglucosamine-6-phosphate (GlcNAc-6-P). The protein is Putative N-acetylmannosamine-6-phosphate 2-epimerase of Yersinia pseudotuberculosis serotype O:1b (strain IP 31758).